The primary structure comprises 230 residues: uncharacterized protein (230 aa).

This is an uncharacterized protein from Sinorhizobium fredii (strain NBRC 101917 / NGR234).